The primary structure comprises 326 residues: Lipopolysaccharide heptosyltransferase 1 (326 aa).

Residues T187, T188, K192, E222, and M242 each coordinate ADP. ADP-L-glycero-beta-D-manno-heptose-binding residues include T187, T188, K192, E222, M242, D261, T262, G263, and H266. ADP contacts are provided by T262 and G263.

The protein belongs to the glycosyltransferase 9 family. In terms of assembly, monomer.

It is found in the cell inner membrane. The enzyme catalyses an alpha-Kdo-(2-&gt;4)-alpha-Kdo-(2-&gt;6)-lipid A + ADP-L-glycero-beta-D-manno-heptose = an L-alpha-D-Hep-(1-&gt;5)-[alpha-Kdo-(2-&gt;4)]-alpha-Kdo-(2-&gt;6)-lipid A + ADP + H(+). The catalysed reaction is alpha-Kdo-(2-&gt;4)-alpha-Kdo-(2-&gt;6)-lipid A (E. coli) + ADP-L-glycero-beta-D-manno-heptose = L-alpha-D-Hep-(1-&gt;5)-[alpha-Kdo-(2-&gt;4)]-alpha-Kdo-(2-&gt;6)-lipid A (E. coli) + ADP + H(+). Its pathway is bacterial outer membrane biogenesis; LPS core biosynthesis. With respect to regulation, inhibited by ADP-L-glycero-beta-D-gluco-2-deoxy-2-fluoro-heptose (ADP-2F-heptose), a non-cleavable analog of the substrate ADP-L-glycero-beta-D-manno-heptose. Glycosyltransferase involved in the biosynthesis of the core oligosaccharide region of lipopolysaccharide (LPS). Catalyzes the addition of the first heptose unit to one 3-deoxy-D-manno-octulosonic acid (Kdo) residue of the Kdo2-lipid A module. The protein is Lipopolysaccharide heptosyltransferase 1 of Escherichia coli O18:K1:H7 (strain RS218 / NMEC).